Reading from the N-terminus, the 192-residue chain is dTTP/UTP pyrophosphatase (192 aa).

Residue Asp70 is the Proton acceptor of the active site.

The protein belongs to the Maf family. YhdE subfamily. A divalent metal cation is required as a cofactor.

The protein localises to the cytoplasm. The enzyme catalyses dTTP + H2O = dTMP + diphosphate + H(+). It carries out the reaction UTP + H2O = UMP + diphosphate + H(+). Its function is as follows. Nucleoside triphosphate pyrophosphatase that hydrolyzes dTTP and UTP. May have a dual role in cell division arrest and in preventing the incorporation of modified nucleotides into cellular nucleic acids. In Alkaliphilus oremlandii (strain OhILAs) (Clostridium oremlandii (strain OhILAs)), this protein is dTTP/UTP pyrophosphatase.